A 182-amino-acid polypeptide reads, in one-letter code: Protein canopy homolog 2 (182 aa).

A signal peptide spans 1–20; sequence MKGWGWLALLLGVLLGTAWA. The Saposin B-type domain occupies 24-175; sequence QDLHCGACRA…KRTDLCDHAL (152 aa). 3 disulfide bridges follow: Cys-28-Cys-171, Cys-31-Cys-164, and Cys-86-Cys-137. The residue at position 115 (Ser-115) is a Phosphoserine. Residues 179 to 182 carry the Prevents secretion from ER motif; sequence HDEL.

This sequence belongs to the canopy family. As to quaternary structure, interacts with MYLIP/MIR.

Its subcellular location is the endoplasmic reticulum. Its function is as follows. Positive regulator of neurite outgrowth by stabilizing myosin regulatory light chain (MRLC). It prevents MIR-mediated MRLC ubiquitination and its subsequent proteasomal degradation. This Mus musculus (Mouse) protein is Protein canopy homolog 2 (Cnpy2).